We begin with the raw amino-acid sequence, 604 residues long: Glucoamylase 1 (604 aa).

The signal sequence occupies residues 1 to 25 (MQLFNLPLKVSFFLVLSYFSLLVSA). An adsorption to raw starch region spans residues 26–115 (ASIPSSASVQ…EFYIKYEVSG (90 aa)). In terms of domain architecture, CBM21 spans 26-130 (ASIPSSASVQ…NNNSANYQVS (105 aa)). The interval 116–604 (KTYYDNNNSA…SYAKAGAPAA (489 aa)) is starch degradation. N122 carries N-linked (GlcNAc...) asparagine glycosylation. Residues 127-164 (YQVSTSKPTTTTATATTTTAPSTSTTTPPSRSEPATFP) are disordered. The span at 130-162 (STSKPTTTTATATTTTAPSTSTTTPPSRSEPAT) shows a compositional bias: low complexity. N-linked (GlcNAc...) asparagine glycans are attached at residues N167, N230, and N236. W279 contacts substrate. The active-site Proton acceptor is the D336. The Proton donor role is filled by E339. N-linked (GlcNAc...) asparagine glycosylation occurs at N564.

This sequence belongs to the glycosyl hydrolase 15 family.

The catalysed reaction is Hydrolysis of terminal (1-&gt;4)-linked alpha-D-glucose residues successively from non-reducing ends of the chains with release of beta-D-glucose.. The protein is Glucoamylase 1 of Rhizopus oryzae (Mucormycosis agent).